The chain runs to 224 residues: Uridylate kinase (224 aa).

6–10 contacts ATP; the sequence is KVTGK. UMP is bound at residue Gly41. Positions 42 and 46 each coordinate ATP. UMP contacts are provided by residues Asp63 and 111–117; that span reads FQPGQST. The ATP site is built by Thr137, Phe143, and Asp146.

It belongs to the UMP kinase family. In terms of assembly, homohexamer.

It is found in the cytoplasm. It catalyses the reaction UMP + ATP = UDP + ADP. The protein operates within pyrimidine metabolism; CTP biosynthesis via de novo pathway; UDP from UMP (UMPK route): step 1/1. With respect to regulation, inhibited by UTP. Functionally, catalyzes the reversible phosphorylation of UMP to UDP. This is Uridylate kinase from Metallosphaera sedula (strain ATCC 51363 / DSM 5348 / JCM 9185 / NBRC 15509 / TH2).